Consider the following 261-residue polypeptide: Probable pectin methylesterase CGR2 (261 aa).

The Cytoplasmic segment spans residues 1-35; it reads MARRQVGSTRRVGDGGSFPFAGALHSKSRSSPLLS. Residues 36-56 traverse the membrane as a helical segment; sequence ICLVLVGACLLIGYAYSGPGI. The Lumenal portion of the chain corresponds to 57–261; that stretch reads FKSIKEVSKV…CQVFHLKPLH (205 aa). N174 carries an N-linked (GlcNAc...) asparagine glycan.

The protein belongs to the class I-like SAM-binding methyltransferase superfamily.

It localises to the golgi apparatus membrane. In terms of biological role, together with CGR3, required for homogalacturonan pectins (HG) methylesterification in the Golgi apparatus prior to integration into cell walls, essential for general growth and development. Promotes rosette growth. Impacts carbon (C) partitioning, photosynthesis and respiration efficiency by influencing leaf mesophyll cell walls morphology and physiology; pectin methylesterification modulates both expansion and positioning of cells in leaves, probably by changing cell walls plasticity. This chain is Probable pectin methylesterase CGR2, found in Arabidopsis thaliana (Mouse-ear cress).